We begin with the raw amino-acid sequence, 361 residues long: Queuine tRNA-ribosyltransferase (361 aa).

Residue Asp92 is the Proton acceptor of the active site. Substrate-binding positions include 92 to 96, Asp146, Gln189, and Gly216; that span reads DSGGF. The RNA binding stretch occupies residues 247–253; it reads GVGKPAD. Asp266 acts as the Nucleophile in catalysis. Positions 271 to 275 are RNA binding; important for wobble base 34 recognition; the sequence is TRSGR. Zn(2+)-binding residues include Cys304, Cys306, Cys309, and His335.

It belongs to the queuine tRNA-ribosyltransferase family. In terms of assembly, homodimer. Within each dimer, one monomer is responsible for RNA recognition and catalysis, while the other monomer binds to the replacement base PreQ1. The cofactor is Zn(2+).

The enzyme catalyses 7-aminomethyl-7-carbaguanine + guanosine(34) in tRNA = 7-aminomethyl-7-carbaguanosine(34) in tRNA + guanine. It participates in tRNA modification; tRNA-queuosine biosynthesis. Its function is as follows. Catalyzes the base-exchange of a guanine (G) residue with the queuine precursor 7-aminomethyl-7-deazaguanine (PreQ1) at position 34 (anticodon wobble position) in tRNAs with GU(N) anticodons (tRNA-Asp, -Asn, -His and -Tyr). Catalysis occurs through a double-displacement mechanism. The nucleophile active site attacks the C1' of nucleotide 34 to detach the guanine base from the RNA, forming a covalent enzyme-RNA intermediate. The proton acceptor active site deprotonates the incoming PreQ1, allowing a nucleophilic attack on the C1' of the ribose to form the product. After dissociation, two additional enzymatic reactions on the tRNA convert PreQ1 to queuine (Q), resulting in the hypermodified nucleoside queuosine (7-(((4,5-cis-dihydroxy-2-cyclopenten-1-yl)amino)methyl)-7-deazaguanosine). The sequence is that of Queuine tRNA-ribosyltransferase from Rickettsia akari (strain Hartford).